The primary structure comprises 364 residues: Coproporphyrin III ferrochelatase (364 aa).

Residues R29 and Y118 each contribute to the Fe-coproporphyrin III site. H169 and E250 together coordinate Fe(2+).

This sequence belongs to the ferrochelatase family.

It is found in the cytoplasm. The catalysed reaction is Fe-coproporphyrin III + 2 H(+) = coproporphyrin III + Fe(2+). Its pathway is porphyrin-containing compound metabolism; protoheme biosynthesis. In terms of biological role, involved in coproporphyrin-dependent heme b biosynthesis. Catalyzes the insertion of ferrous iron into coproporphyrin III to form Fe-coproporphyrin III. This chain is Coproporphyrin III ferrochelatase, found in Streptococcus pneumoniae serotype 2 (strain D39 / NCTC 7466).